The sequence spans 270 residues: uncharacterized protein (270 aa).

The N-terminal stretch at 1–22 (MEYIKKIALYMSVLLLIIFIGG) is a signal peptide. Residue cysteine 23 is the site of N-palmitoyl cysteine attachment. The S-diacylglycerol cysteine moiety is linked to residue cysteine 23.

The protein belongs to the staphylococcal tandem lipoprotein family.

The protein localises to the cell membrane. This is an uncharacterized protein from Staphylococcus aureus (strain MW2).